Consider the following 556-residue polypeptide: Oxygen-dependent choline dehydrogenase (556 aa).

4–33 (DYIIIGAGSAGNVLATRLTEDPNTTVLLLE) is an FAD binding site. His473 (proton acceptor) is an active-site residue.

It belongs to the GMC oxidoreductase family. FAD is required as a cofactor.

It catalyses the reaction choline + A = betaine aldehyde + AH2. The enzyme catalyses betaine aldehyde + NAD(+) + H2O = glycine betaine + NADH + 2 H(+). It functions in the pathway amine and polyamine biosynthesis; betaine biosynthesis via choline pathway; betaine aldehyde from choline (cytochrome c reductase route): step 1/1. Involved in the biosynthesis of the osmoprotectant glycine betaine. Catalyzes the oxidation of choline to betaine aldehyde and betaine aldehyde to glycine betaine at the same rate. In Escherichia coli O127:H6 (strain E2348/69 / EPEC), this protein is Oxygen-dependent choline dehydrogenase.